The following is a 423-amino-acid chain: Gamma-glutamyl phosphate reductase (423 aa).

This sequence belongs to the gamma-glutamyl phosphate reductase family.

Its subcellular location is the cytoplasm. It catalyses the reaction L-glutamate 5-semialdehyde + phosphate + NADP(+) = L-glutamyl 5-phosphate + NADPH + H(+). It participates in amino-acid biosynthesis; L-proline biosynthesis; L-glutamate 5-semialdehyde from L-glutamate: step 2/2. In terms of biological role, catalyzes the NADPH-dependent reduction of L-glutamate 5-phosphate into L-glutamate 5-semialdehyde and phosphate. The product spontaneously undergoes cyclization to form 1-pyrroline-5-carboxylate. The polypeptide is Gamma-glutamyl phosphate reductase (Pseudomonas putida (strain ATCC 700007 / DSM 6899 / JCM 31910 / BCRC 17059 / LMG 24140 / F1)).